The primary structure comprises 2718 residues: Zinc finger protein 40 (2718 aa).

3 disordered regions span residues 58 to 182 (HLKK…CISS), 210 to 256 (LSQK…AESQ), and 335 to 373 (GLTS…PMPI). The residue at position 141 (Ser-141) is a Phosphoserine. Residues 142–158 (ELRRWRSEGADPAKFSD) are compositionally biased toward basic and acidic residues. 2 stretches are compositionally biased toward polar residues: residues 164 to 182 (DSSS…CISS) and 237 to 256 (KNSS…AESQ). A C2H2-type 1 zinc finger spans residues 406-428 (YICEYCNRACAKPSVLLKHIRSH). Position 429 is a phosphothreonine (Thr-429). The C2H2-type 2 zinc finger occupies 434-456 (YPCVTCGFSFKTKSNLYKHKKSH). A phosphoserine mark is found at Ser-476, Ser-479, Ser-492, Ser-495, Ser-571, and Ser-577. Positions 484–511 (SIHSDVEDSGESEEEGATDERQHDLGAM) are disordered. Over residues 490 to 500 (EDSGESEEEGA) the composition is skewed to acidic residues. The disordered stretch occupies residues 574–727 (RTDSPKAMDP…TPSALPTGEK (154 aa)). Positions 576–585 (DSPKAMDPKP) are enriched in basic and acidic residues. Residues 588–612 (SSAQKQKDLQVTNVQPLSANMSQGG) show a composition bias toward polar residues. Residues 617-626 (ETNENSHQKG) show a composition bias toward basic and acidic residues. 2 stretches are compositionally biased toward polar residues: residues 644–687 (AQLQ…QTVS) and 698–721 (STEQ…TPSA). Residues Ser-670 and Ser-681 each carry the phosphoserine modification. A CCHC HIVEP-type zinc finger spans residues 956 to 986 (GTMFECETCRNRYRKLENFENHKKFYCSELH). Residues 1022 to 1062 (WEQTPQIRKRRKMKSVGDDEELQQNESGTSPKSSEGLQFQN) form a disordered region. Phosphoserine is present on residues Ser-1036, Ser-1051, Ser-1091, Ser-1158, Ser-1161, and Ser-1180. Polar residues predominate over residues 1045–1062 (QNESGTSPKSSEGLQFQN). The segment at 1138–1169 (HTNSLSRPNSFDKPEPFERASPVSFQELNRTG) is disordered. Residues 1160 to 1169 (VSFQELNRTG) are compositionally biased toward polar residues. Composition is skewed to basic and acidic residues over residues 1202-1219 (LRGE…ERHV) and 1246-1259 (DLEA…KSEK). Disordered regions lie at residues 1202–1282 (LRGE…PKKK), 1384–1414 (RSKS…SRVG), and 1523–1548 (SHQS…VLSG). A Phosphothreonine modification is found at Thr-1268. 2 stretches are compositionally biased toward low complexity: residues 1394-1406 (TPPQ…ELQP) and 1523-1536 (SHQS…VSTQ). Ser-1735, Ser-1740, Ser-1749, and Ser-1753 each carry phosphoserine. Positions 1871-1883 (VRSSPAPSENTHI) are enriched in polar residues. The disordered stretch occupies residues 1871 to 1911 (VRSSPAPSENTHISPLKCTDNNQERKSPGVKNQGDKVNIQE). Phosphoserine is present on residues Ser-1884 and Ser-2033. C2H2-type zinc fingers lie at residues 2088 to 2110 (YICE…IRTH) and 2116 to 2140 (YHCT…SKAH). 4 disordered regions span residues 2155–2228 (DEQD…PVST), 2265–2303 (SDYN…HQMS), 2327–2381 (SPSS…THLF), and 2572–2718 (PASQ…VIAT). Basic and acidic residues predominate over residues 2164–2175 (EKQRFSYERSGY). Over residues 2176-2198 (DLEESDGPDEDDNENEDDDEDSQ) the composition is skewed to acidic residues. 2 stretches are compositionally biased toward polar residues: residues 2199-2226 (AESV…QDPV) and 2288-2300 (TIPS…SPCH). A phosphoserine mark is found at Ser-2327 and Ser-2599. Polar residues predominate over residues 2573–2608 (ASQSKACETQPKQTSVASANQVSRTESPQGLPTVQR). Positions 2623-2637 (DHARLDGLSKMDTEK) are enriched in basic and acidic residues. Polar residues predominate over residues 2651-2663 (TSIQGQPASTSQP). Residues Ser-2669 and Ser-2682 each carry the phosphoserine modification.

Interacts with UTP4.

It is found in the nucleus. The protein localises to the cytoplasm. Functionally, this protein specifically binds to the DNA sequence 5'-GGGACTTTCC-3' which is found in the enhancer elements of numerous viral promoters such as those of SV40, CMV, or HIV-1. In addition, related sequences are found in the enhancer elements of a number of cellular promoters, including those of the class I MHC, interleukin-2 receptor, and interferon-beta genes. It may act in T-cell activation. Involved in activating HIV-1 gene expression. Isoform 2 and isoform 3 also bind to the IPCS (IRF1 and p53 common sequence) DNA sequence in the promoter region of interferon regulatory factor 1 and p53 genes and are involved in transcription regulation of these genes. Isoform 2 does not activate HIV-1 gene expression. Isoform 2 and isoform 3 may be involved in apoptosis. This chain is Zinc finger protein 40 (HIVEP1), found in Homo sapiens (Human).